We begin with the raw amino-acid sequence, 286 residues long: ATP synthase gamma chain (286 aa).

It belongs to the ATPase gamma chain family. F-type ATPases have 2 components, CF(1) - the catalytic core - and CF(0) - the membrane proton channel. CF(1) has five subunits: alpha(3), beta(3), gamma(1), delta(1), epsilon(1). CF(0) has three main subunits: a, b and c.

The protein localises to the cell inner membrane. Its function is as follows. Produces ATP from ADP in the presence of a proton gradient across the membrane. The gamma chain is believed to be important in regulating ATPase activity and the flow of protons through the CF(0) complex. This chain is ATP synthase gamma chain, found in Christiangramia forsetii (strain DSM 17595 / CGMCC 1.15422 / KT0803) (Gramella forsetii).